A 182-amino-acid polypeptide reads, in one-letter code: MQDLSGFSVPKGFRGGNAIKVQLWWAVQATIFAWSPQVLYRWRAFLLRLFGAKIGKNVVIRPSVKITYPWKLTLGDYAWVGDDVNLYTLGEITIGAHSVISQKSYLCTGSHDHASQHFTINATPIVIGEKCWLATDVFVAPGVTIGDGTVVGARSSVFKSLPANVVCRGNPAVVIRERVETE.

The protein belongs to the transferase hexapeptide repeat family.

The protein operates within slime biogenesis; slime polysaccharide biosynthesis. This chain is Putative colanic acid biosynthesis acetyltransferase WcaF (wcaF), found in Shigella flexneri.